The following is a 631-amino-acid chain: uncharacterized protein (631 aa).

The first 20 residues, 1–20 (MVRFVSILSLFGCAATLVTA), serve as a signal peptide directing secretion. The Lumenal segment spans residues 21–105 (HDDMDMDMDM…AGNRSALRYH (85 aa)). Residues Asn87 and Asn98 are each glycosylated (N-linked (GlcNAc...) asparagine). The helical transmembrane segment at 106-126 (IITLLLVAFVLYPVSLALSAA) threads the bilayer. At 127 to 131 (RSRWY) the chain is on the cytoplasmic side. A helical transmembrane segment spans residues 132-152 (LPLLFVNLCICISSVMALSVF). Residues 153 to 170 (KNTFPEEDWYAHNIYGTT) are Lumenal-facing. A helical transmembrane segment spans residues 171–191 (SVLLLVFMLVHFFAAVLSVPV). The Cytoplasmic portion of the chain corresponds to 192 to 322 (SLASKKEYRP…LSCVANVVFH (131 aa)). A disordered region spans residues 216–274 (MVNSARGSPSPSSNRDTLFSLSSDTTTATATNNNKRRRAEGEDEGDNTSNHDTLRDEDY). Ser219 bears the Phosphoserine mark. The span at 220–239 (ARGSPSPSSNRDTLFSLSSD) shows a compositional bias: polar residues. Lys250 participates in a covalent cross-link: Glycyl lysine isopeptide (Lys-Gly) (interchain with G-Cter in ubiquitin). The helical transmembrane segment at 323 to 343 (MLTYPLFMYIFVDLIIGFAVG) threads the bilayer. Residues 344-351 (NLLGKGIR) lie on the Lumenal side of the membrane. The helical transmembrane segment at 352–372 (IFNLLAHWIKGGVFFTLGVVS) threads the bilayer. The Cytoplasmic segment spans residues 373–407 (LARYCGFAAKYGWAWNNISFTSQLTQTRSSNLLFR). The chain crosses the membrane as a helical span at residues 408–428 (FAPAGTFTMEFVESFLIFFYG). The Lumenal portion of the chain corresponds to 429 to 451 (STNIFLEHLAGNGGAWTAKDLQH). Residues 452–472 (VSIAFMFIGTGLCGLLTEYKL) form a helical membrane-spanning segment. The Cytoplasmic segment spans residues 473–529 (NHWRFEHARKRPQTDVVAATPGYSPNPFPAFTIFWTGILMSQHAQSSQFSTTIHTQW). A helical transmembrane segment spans residues 530-550 (GYLLSYGSFFRLLTFLILFLV). The Lumenal segment spans residues 551 to 598 (PNTNSAASKPFTELITSFCLLCGGLVFMESTDQSIEAMEYRGFTPMFT). A helical membrane pass occupies residues 599-619 (FNLSVGFVSLLMAWEMILFIW). The Cytoplasmic segment spans residues 620-631 (KDWLIKTRKTSL).

This sequence to S.pombe SpBC3B8.06.

The protein localises to the membrane. This is an uncharacterized protein from Saccharomyces cerevisiae (strain ATCC 204508 / S288c) (Baker's yeast).